The chain runs to 68 residues: MQIIVRDNNVDQALRALKKKLQREGVYREMKLRRHYEKPSEKRARERAAAVRRSRKLERKRAERDGIR.

The disordered stretch occupies residues 36 to 68 (YEKPSEKRARERAAAVRRSRKLERKRAERDGIR). Positions 37-49 (EKPSEKRARERAA) are enriched in basic and acidic residues. Residues 50–59 (AVRRSRKLER) show a composition bias toward basic residues.

This sequence belongs to the bacterial ribosomal protein bS21 family.

This Zymomonas mobilis subsp. mobilis (strain ATCC 31821 / ZM4 / CP4) protein is Small ribosomal subunit protein bS21.